The primary structure comprises 598 residues: Membrane protein insertase YidC (598 aa).

The chain crosses the membrane as a helical span at residues 7-27 (NYFIAIALSVLIVLGWQFLYM). Positions 37–71 (AQEAQKAQQQTEQVQQPAAGGATPAPASGTAPSGQ) are disordered. Residues 40–71 (AQKAQQQTEQVQQPAAGGATPAPASGTAPSGQ) are compositionally biased toward low complexity. Transmembrane regions (helical) follow at residues 373–393 (FFGNFGVAILCTTIVVKALFF), 447–467 (WPVALQIPIFFSLYKVIYITI), 492–512 (LFGLLPFTAPTFLHLGVWPLI), and 538–558 (WMPLVFMFMLASFPAGLVIYW).

It belongs to the OXA1/ALB3/YidC family. Type 1 subfamily. As to quaternary structure, interacts with the Sec translocase complex via SecD. Specifically interacts with transmembrane segments of nascent integral membrane proteins during membrane integration.

Its subcellular location is the cell inner membrane. In terms of biological role, required for the insertion and/or proper folding and/or complex formation of integral membrane proteins into the membrane. Involved in integration of membrane proteins that insert both dependently and independently of the Sec translocase complex, as well as at least some lipoproteins. Aids folding of multispanning membrane proteins. The polypeptide is Membrane protein insertase YidC (Rhizobium etli (strain CIAT 652)).